A 480-amino-acid chain; its full sequence is Protein nucleotidyltransferase YdiU (480 aa).

Gly86, Gly88, Arg89, Lys109, Asp121, Gly122, Arg172, and Arg179 together coordinate ATP. Asp248 functions as the Proton acceptor in the catalytic mechanism. The Mg(2+) site is built by Asn249 and Asp258. An ATP-binding site is contributed by Asp258.

It belongs to the SELO family. Requires Mg(2+) as cofactor. Mn(2+) is required as a cofactor.

The enzyme catalyses L-seryl-[protein] + ATP = 3-O-(5'-adenylyl)-L-seryl-[protein] + diphosphate. It carries out the reaction L-threonyl-[protein] + ATP = 3-O-(5'-adenylyl)-L-threonyl-[protein] + diphosphate. The catalysed reaction is L-tyrosyl-[protein] + ATP = O-(5'-adenylyl)-L-tyrosyl-[protein] + diphosphate. It catalyses the reaction L-histidyl-[protein] + UTP = N(tele)-(5'-uridylyl)-L-histidyl-[protein] + diphosphate. The enzyme catalyses L-seryl-[protein] + UTP = O-(5'-uridylyl)-L-seryl-[protein] + diphosphate. It carries out the reaction L-tyrosyl-[protein] + UTP = O-(5'-uridylyl)-L-tyrosyl-[protein] + diphosphate. Its function is as follows. Nucleotidyltransferase involved in the post-translational modification of proteins. It can catalyze the addition of adenosine monophosphate (AMP) or uridine monophosphate (UMP) to a protein, resulting in modifications known as AMPylation and UMPylation. This is Protein nucleotidyltransferase YdiU from Salmonella paratyphi B (strain ATCC BAA-1250 / SPB7).